We begin with the raw amino-acid sequence, 83 residues long: Putative membrane protein insertion efficiency factor (83 aa).

Residues 63 to 83 (GGNDPVPDHFSLRRNKTDISD) form a disordered region. Positions 68–83 (VPDHFSLRRNKTDISD) are enriched in basic and acidic residues.

Belongs to the UPF0161 family.

It is found in the cell membrane. Could be involved in insertion of integral membrane proteins into the membrane. In Streptococcus agalactiae serotype Ia (strain ATCC 27591 / A909 / CDC SS700), this protein is Putative membrane protein insertion efficiency factor.